The following is a 258-amino-acid chain: Mitochondrial distribution and morphology protein 12 (258 aa).

One can recognise an SMP-LTD domain in the interval 1–233 (MSFDIHWSNL…WPSWIELDFN (233 aa)). Residues 238–258 (EDLQQSKDTPTTANTGTTTTN) are disordered. Residues 246–258 (TPTTANTGTTTTN) show a composition bias toward low complexity.

This sequence belongs to the MDM12 family. In terms of assembly, component of the ER-mitochondria encounter structure (ERMES) or MDM complex, composed of MMM1, MDM10, MDM12 and MDM34. An MMM1 homodimer associates with one molecule of MDM12 on each side in a pairwise head-to-tail manner, and the SMP-LTD domains of MMM1 and MDM12 generate a continuous hydrophobic tunnel for phospholipid trafficking.

It is found in the mitochondrion outer membrane. It localises to the endoplasmic reticulum membrane. Functionally, component of the ERMES/MDM complex, which serves as a molecular tether to connect the endoplasmic reticulum (ER) and mitochondria. Components of this complex are involved in the control of mitochondrial shape and protein biogenesis, and function in nonvesicular lipid trafficking between the ER and mitochondria. MDM12 is required for the interaction of the ER-resident membrane protein MMM1 and the outer mitochondrial membrane-resident beta-barrel protein MDM10. The MDM12-MMM1 subcomplex functions in the major beta-barrel assembly pathway that is responsible for biogenesis of all mitochondrial outer membrane beta-barrel proteins, and acts in a late step after the SAM complex. The MDM10-MDM12-MMM1 subcomplex further acts in the TOM40-specific pathway after the action of the MDM12-MMM1 complex. Essential for establishing and maintaining the structure of mitochondria and maintenance of mtDNA nucleoids. In Zygosaccharomyces rouxii (strain ATCC 2623 / CBS 732 / NBRC 1130 / NCYC 568 / NRRL Y-229), this protein is Mitochondrial distribution and morphology protein 12.